A 341-amino-acid polypeptide reads, in one-letter code: L-sulfolactate dehydrogenase (341 aa).

The protein belongs to the LDH2/MDH2 oxidoreductase family.

It is found in the cytoplasm. It catalyses the reaction a (2S)-2-hydroxycarboxylate + NAD(+) = a 2-oxocarboxylate + NADH + H(+). Its pathway is cofactor biosynthesis; coenzyme M biosynthesis; sulfoacetaldehyde from phosphoenolpyruvate and sulfite: step 3/4. It functions in the pathway cofactor biosynthesis; 5,6,7,8-tetrahydromethanopterin biosynthesis. Catalyzes the reduction of sulfopyruvate to (R)-sulfolactate. Involved in the biosynthesis of both coenzyme M (with (R)-sulfolactate) and methanopterin (with alpha-ketoglutarate). In Methanothermobacter thermautotrophicus (strain ATCC 29096 / DSM 1053 / JCM 10044 / NBRC 100330 / Delta H) (Methanobacterium thermoautotrophicum), this protein is L-sulfolactate dehydrogenase (comC).